Here is a 452-residue protein sequence, read N- to C-terminus: Chromosomal replication initiator protein DnaA (452 aa).

The segment at 1–85 (MSTTAWQKCL…IEVGSKPVEA (85 aa)) is domain I, interacts with DnaA modulators. The domain II stretch occupies residues 85 to 115 (AVDTPAETIVTSSSTAPLKSAPKKAVDYKSS). The domain III, AAA+ region stretch occupies residues 116 to 332 (HLNKKFVFDS…GALRRVIANA (217 aa)). ATP is bound by residues Gly160, Gly162, Lys163, and Thr164. The interval 333–452 (HFTGKPITIE…YKNLMRILSS (120 aa)) is domain IV, binds dsDNA.

This sequence belongs to the DnaA family. Oligomerizes as a right-handed, spiral filament on DNA at oriC.

It is found in the cytoplasm. Functionally, plays an essential role in the initiation and regulation of chromosomal replication. ATP-DnaA binds to the origin of replication (oriC) to initiate formation of the DNA replication initiation complex once per cell cycle. Binds the DnaA box (a 9 base pair repeat at the origin) and separates the double-stranded (ds)DNA. Forms a right-handed helical filament on oriC DNA; dsDNA binds to the exterior of the filament while single-stranded (ss)DNA is stabiized in the filament's interior. The ATP-DnaA-oriC complex binds and stabilizes one strand of the AT-rich DNA unwinding element (DUE), permitting loading of DNA polymerase. After initiation quickly degrades to an ADP-DnaA complex that is not apt for DNA replication. Binds acidic phospholipids. The sequence is that of Chromosomal replication initiator protein DnaA from Legionella pneumophila (strain Paris).